A 135-amino-acid polypeptide reads, in one-letter code: Large ribosomal subunit protein uL18 (135 aa).

Residues 1–25 form a disordered region; that stretch reads MAQTENQKSKRIPLGKDVSTQRRLS.

The protein belongs to the universal ribosomal protein uL18 family. Part of the 50S ribosomal subunit; part of the 5S rRNA/L5/L18/L25 subcomplex. Contacts the 5S and 23S rRNAs.

This is one of the proteins that bind and probably mediate the attachment of the 5S RNA into the large ribosomal subunit, where it forms part of the central protuberance. This is Large ribosomal subunit protein uL18 from Nocardia farcinica (strain IFM 10152).